A 914-amino-acid chain; its full sequence is Transcription factor AZF1 (914 aa).

Disordered regions lie at residues 1–63, 93–124, and 138–275; these read MPPP…ESIS, STGGPSSGGAYSNLPRLSTSSTHQPPDLSQIG, and QQLQ…NSNQ. Residues 13–34 show a composition bias toward polar residues; it reads QAGQNESQNQSSGEAGEQNQEH. Residues 44-56 show a composition bias toward low complexity; sequence QSQPASSQPQHQQ. S61 bears the Phosphoserine mark. A compositionally biased stretch (polar residues) spans 107 to 116; it reads PRLSTSSTHQ. The segment at 136 to 158 is polyglutamine domain; the sequence is QQQQLQNQHRQQQQQQQQQSHQQ. Over residues 138 to 158 the composition is skewed to low complexity; sequence QQLQNQHRQQQQQQQQQSHQQ. A compositionally biased stretch (polar residues) spans 164–194; it reads PSFSTGLTGSSSQYQFLPRNDNTSQPPSKRN. Low complexity-rich tracts occupy residues 206-222 and 245-275; these read FEFFSMQQSQQPQFQPS and SNGTNNSGNMNTNADYESFFNTGTNNSNSNQ. Phosphoserine occurs at positions 286 and 325. Positions 326–415 are disordered; that stretch reads LSVNNKANGD…STDTTSNSRK (90 aa). Residues 359–390 are compositionally biased toward low complexity; the sequence is DSSNNNNNNNNNNNNENNNDNNNDNNDNSINS. Positions 362–386 are polyasparagine domain; sequence NNNNNNNNNNNNENNNDNNNDNNDN. Polar residues predominate over residues 391-412; it reads ATSTNIPNQEDHSLASTDTTSN. 4 consecutive C2H2-type zinc fingers follow at residues 593-615, 621-643, 649-671, and 677-702; these read HECPYCHRLFSQATHLEVHVRSH, FVCDYCGKRFTQGGNLRTHERLH, YSCDICDKKFSRKGNLAAHLVTH, and FVCKLENCNKTFTQLGNMKAHQNRFH. Disordered stretches follow at residues 743 to 812 and 853 to 877; these read GIKG…SPTQ and RLGSSSSSNTNNNNSNFSVGAAPGV. A compositionally biased stretch (polar residues) spans 754-770; it reads KKSTISSPENHPASTIL. Composition is skewed to low complexity over residues 771–782, 796–809, and 856–868; these read NPNTNANNAIAN, SSSNSNPGSHSMIS, and SSSSSNTNNNNSN.

It localises to the nucleus. Its subcellular location is the cytoplasm. It is found in the cytosol. Functionally, transcription factor involved in the diauxic shift. In the presence of glucose, activates carbon and energy metabolism genes, and in te presence of glycerol-lactate, activates genes needed for cell wall maintenance. Binds to DNA elements with the sequence AAAAGAAA (A4GA3), a motif enriched in the promoters of AZF1-sensitive genes. Required for glucose induction of CLN3 transcription. Also required for proper FLO11 expression. May also function as a corepressor. Its function is as follows. As an intrinsically disordered protein, AZF1 is capable of forming the prion [AZF1+] that confers resistance to the drug radicicol in a gain-of-function manner but decreases the expression of AZF1's target genes. This Saccharomyces cerevisiae (strain ATCC 204508 / S288c) (Baker's yeast) protein is Transcription factor AZF1.